A 416-amino-acid chain; its full sequence is Multifunctional CCA protein (416 aa).

ATP contacts are provided by Gly-8 and Arg-11. CTP contacts are provided by Gly-8 and Arg-11. 2 residues coordinate Mg(2+): Asp-21 and Asp-23. ATP is bound by residues Arg-91, Arg-138, and Arg-141. CTP is bound by residues Arg-91, Arg-138, and Arg-141. Residues 229-331 form the HD domain; it reads TGLHQELVSD…YELLQRCDAF (103 aa).

This sequence belongs to the tRNA nucleotidyltransferase/poly(A) polymerase family. Bacterial CCA-adding enzyme type 1 subfamily. Monomer. Can also form homodimers and oligomers. The cofactor is Mg(2+). Ni(2+) serves as cofactor.

The enzyme catalyses a tRNA precursor + 2 CTP + ATP = a tRNA with a 3' CCA end + 3 diphosphate. The catalysed reaction is a tRNA with a 3' CCA end + 2 CTP + ATP = a tRNA with a 3' CCACCA end + 3 diphosphate. Functionally, catalyzes the addition and repair of the essential 3'-terminal CCA sequence in tRNAs without using a nucleic acid template. Adds these three nucleotides in the order of C, C, and A to the tRNA nucleotide-73, using CTP and ATP as substrates and producing inorganic pyrophosphate. tRNA 3'-terminal CCA addition is required both for tRNA processing and repair. Also involved in tRNA surveillance by mediating tandem CCA addition to generate a CCACCA at the 3' terminus of unstable tRNAs. While stable tRNAs receive only 3'-terminal CCA, unstable tRNAs are marked with CCACCA and rapidly degraded. This is Multifunctional CCA protein from Xylella fastidiosa (strain M23).